Here is a 280-residue protein sequence, read N- to C-terminus: Pantothenate synthetase (280 aa).

Residue 30–37 (MGYLHEGH) participates in ATP binding. His-37 functions as the Proton donor in the catalytic mechanism. A (R)-pantoate-binding site is contributed by Gln-61. Gln-61 serves as a coordination point for beta-alanine. 147–150 (GKKD) contributes to the ATP binding site. Gln-153 is a (R)-pantoate binding site. ATP contacts are provided by residues Val-176 and 184–187 (MSSR).

The protein belongs to the pantothenate synthetase family. In terms of assembly, homodimer.

Its subcellular location is the cytoplasm. The enzyme catalyses (R)-pantoate + beta-alanine + ATP = (R)-pantothenate + AMP + diphosphate + H(+). Its pathway is cofactor biosynthesis; (R)-pantothenate biosynthesis; (R)-pantothenate from (R)-pantoate and beta-alanine: step 1/1. Its function is as follows. Catalyzes the condensation of pantoate with beta-alanine in an ATP-dependent reaction via a pantoyl-adenylate intermediate. The chain is Pantothenate synthetase from Sulfurihydrogenibium sp. (strain YO3AOP1).